A 122-amino-acid chain; its full sequence is Large ribosomal subunit protein bL12 (122 aa).

The protein belongs to the bacterial ribosomal protein bL12 family. In terms of assembly, homodimer. Part of the ribosomal stalk of the 50S ribosomal subunit. Forms a multimeric L10(L12)X complex, where L10 forms an elongated spine to which 2 to 4 L12 dimers bind in a sequential fashion. Binds GTP-bound translation factors.

In terms of biological role, forms part of the ribosomal stalk which helps the ribosome interact with GTP-bound translation factors. Is thus essential for accurate translation. The polypeptide is Large ribosomal subunit protein bL12 (Sodalis glossinidius (strain morsitans)).